A 360-amino-acid chain; its full sequence is D-alanine--D-alanine ligase (360 aa).

The 205-residue stretch at 149-353 (KKLMAAEGLP…YEELLDVLVQ (205 aa)) folds into the ATP-grasp domain. 176–231 (KNLLGLPVFVKPARGGSSIGISRVTAWEDFNKAVGLARAHDEKVIVESEIVGSEVE) lines the ATP pocket. Residues Asp308, Glu320, and Asn322 each coordinate Mg(2+).

This sequence belongs to the D-alanine--D-alanine ligase family. Mg(2+) serves as cofactor. The cofactor is Mn(2+).

The protein resides in the cytoplasm. The enzyme catalyses 2 D-alanine + ATP = D-alanyl-D-alanine + ADP + phosphate + H(+). Its pathway is cell wall biogenesis; peptidoglycan biosynthesis. Functionally, cell wall formation. The chain is D-alanine--D-alanine ligase from Corynebacterium glutamicum (strain R).